The sequence spans 343 residues: Tetraacyldisaccharide 4'-kinase (343 aa).

ATP is bound at residue serine 47–threonine 54.

This sequence belongs to the LpxK family.

The enzyme catalyses a lipid A disaccharide + ATP = a lipid IVA + ADP + H(+). The protein operates within glycolipid biosynthesis; lipid IV(A) biosynthesis; lipid IV(A) from (3R)-3-hydroxytetradecanoyl-[acyl-carrier-protein] and UDP-N-acetyl-alpha-D-glucosamine: step 6/6. Transfers the gamma-phosphate of ATP to the 4'-position of a tetraacyldisaccharide 1-phosphate intermediate (termed DS-1-P) to form tetraacyldisaccharide 1,4'-bis-phosphate (lipid IVA). The polypeptide is Tetraacyldisaccharide 4'-kinase (Flavobacterium psychrophilum (strain ATCC 49511 / DSM 21280 / CIP 103535 / JIP02/86)).